The primary structure comprises 110 residues: Transcription factor S (110 aa).

Residues cysteine 4, cysteine 7, cysteine 22, cysteine 25, cysteine 71, cysteine 74, cysteine 99, and cysteine 102 each contribute to the Zn(2+) site. The segment at 4-25 (CPKCGNLMLPDRKRKVWVCRSC) adopts a C4-type zinc-finger fold. The TFIIS-type zinc finger occupies 67 to 107 (TKITCPKCGNDTAYWWEMQTRAGDEPSTIFYKCTKCGHTWR).

It belongs to the archaeal RpoM/eukaryotic RPA12/RPB9/RPC11 RNA polymerase family.

In terms of biological role, induces RNA cleavage activity in the RNA polymerase. In its presence, the cleavage activity of the RNA polymerase truncates the RNA back to position +15 in a stepwise manner by releasing mainly dinucleotides from the 3'-end of the nascent RNA. The truncated RNAs are able to continue elongation. Involved in transcriptional proofreading and fidelity. Misincorporation of nucleotides during elongation of transcription leads to arrested elongation complexes which are rescued by TFS-promoted removal of a dinucleotide from the 3'-end. TFS is able to induce a cleavage resynthesis cycle in stalled elongation complexes (resulting from the next missing nucleotide or a reduced incorporation rate of a wrong nucleotide) preventing misincorporation and enabling proofreading in a post-incorporation manner. Pausing of elongation complexes is the main determinant of TFS-induced RNA cleavage. The protein is Transcription factor S of Thermococcus celer.